The following is a 387-amino-acid chain: Sorting nexin-7 (387 aa).

Residues lysine 30 to leucine 151 form the PX domain. A 1,2-diacyl-sn-glycero-3-phospho-(1D-myo-inositol-3-phosphate) contacts are provided by arginine 73, glutamine 75, lysine 103, and arginine 117. The BAR domain occupies glycine 178–leucine 387.

The protein belongs to the sorting nexin family. Heterodimer; heterodimerizes with SNX4.

The protein localises to the early endosome membrane. Its function is as follows. Involved in the regulation of endocytosis and in several stages of intracellular trafficking. Together with SNX4, involved in autophagosome assembly by regulating trafficking and recycling of phospholipid scramblase ATG9A. The protein is Sorting nexin-7 of Mus musculus (Mouse).